A 343-amino-acid chain; its full sequence is Selenide, water dikinase (343 aa).

Sec-16 is an active-site residue. Residue Sec-16 is a non-standard amino acid, selenocysteine. ATP contacts are provided by residues Lys-19 and 46-48 (GAE). Residue Asp-49 participates in Mg(2+) binding. Residues Asp-66, Asp-89, and 137 to 139 (GHT) contribute to the ATP site. Residue Asp-89 participates in Mg(2+) binding. Asp-225 serves as a coordination point for Mg(2+).

Belongs to the selenophosphate synthase 1 family. Class I subfamily. Homodimer. It depends on Mg(2+) as a cofactor.

The catalysed reaction is hydrogenselenide + ATP + H2O = selenophosphate + AMP + phosphate + 2 H(+). In terms of biological role, synthesizes selenophosphate from selenide and ATP. The polypeptide is Selenide, water dikinase (Citrifermentans bemidjiense (strain ATCC BAA-1014 / DSM 16622 / JCM 12645 / Bem) (Geobacter bemidjiensis)).